Consider the following 370-residue polypeptide: tRNA N6-adenosine threonylcarbamoyltransferase (370 aa).

Residues H122 and H126 each contribute to the Fe cation site. Substrate-binding positions include 153-157 (LLSGG), D186, G199, and N298. Residue D326 participates in Fe cation binding.

Belongs to the KAE1 / TsaD family. It depends on Fe(2+) as a cofactor.

The protein localises to the cytoplasm. The catalysed reaction is L-threonylcarbamoyladenylate + adenosine(37) in tRNA = N(6)-L-threonylcarbamoyladenosine(37) in tRNA + AMP + H(+). Its function is as follows. Required for the formation of a threonylcarbamoyl group on adenosine at position 37 (t(6)A37) in tRNAs that read codons beginning with adenine. Is involved in the transfer of the threonylcarbamoyl moiety of threonylcarbamoyl-AMP (TC-AMP) to the N6 group of A37, together with TsaE and TsaB. TsaD likely plays a direct catalytic role in this reaction. The sequence is that of tRNA N6-adenosine threonylcarbamoyltransferase from Granulibacter bethesdensis (strain ATCC BAA-1260 / CGDNIH1).